The sequence spans 189 residues: Probable RNA 2'-phosphotransferase (189 aa).

This sequence belongs to the KptA/TPT1 family.

Its function is as follows. Removes the 2'-phosphate from RNA via an intermediate in which the phosphate is ADP-ribosylated by NAD followed by a presumed transesterification to release the RNA and generate ADP-ribose 1''-2''-cyclic phosphate (APPR&gt;P). May function as an ADP-ribosylase. The chain is Probable RNA 2'-phosphotransferase from Streptomyces griseus subsp. griseus (strain JCM 4626 / CBS 651.72 / NBRC 13350 / KCC S-0626 / ISP 5235).